The following is a 355-amino-acid chain: MHC class I-like protein MILL2 (355 aa).

The first 29 residues, 1–29 (MKASSGKPREFRPAVLLLILGLLLRDSRG), serve as a signal peptide directing secretion. An alpha-1 region spans residues 46–137 (RLTRTHTLRY…VINQKSQEEG (92 aa)). 3 disulfides stabilise this stretch: Cys-96-Cys-107, Cys-147-Cys-210, and Cys-249-Cys-306. N-linked (GlcNAc...) asparagine glycosylation is found at Asn-104 and Asn-152. The interval 138-229 (LHTLQATLGC…SLRNGLQDTG (92 aa)) is alpha-2. The interval 230–323 (PPMVTVTCRN…SIMQTAVSGH (94 aa)) is alpha-3. In terms of domain architecture, Ig-like C1-type spans 231 to 321 (PMVTVTCRNY…NHSIMQTAVS (91 aa)). Asn-312 is a glycosylation site (N-linked (GlcNAc...) asparagine). Positions 324-329 (AAEDSQ) are connecting peptide. Asp-330 carries the GPI-anchor amidated aspartate lipid modification. Positions 331–355 (VASSATASAGSALPVVLAVALARAN) are cleaved as a propeptide — removed in mature form.

This sequence belongs to the MHC class I family. Heterodimer with B2M (beta-2-microglobulin). In terms of processing, N-glycosylated. Ubiquitously expressed in neonatal and adult tissues.

It is found in the cell membrane. Its function is as follows. Binds to heparan sulfate proteoglycans on the surface of fibroblast (NIH-3T3) cells. In Mus musculus (Mouse), this protein is MHC class I-like protein MILL2.